Consider the following 409-residue polypeptide: Pentatricopeptide repeat-containing protein At5g09450, mitochondrial (409 aa).

The N-terminal 38 residues, 1 to 38 (MATRSLFHSLRCRLTNNGVLGSNFIRNAESSRFSKSYN), are a transit peptide targeting the mitochondrion. PPR repeat units lie at residues 155–189 (TAET…DSLT), 191–225 (GAIT…KVSP), 226–256 (DIFT…MRHD), 262–296 (GWVR…SISQ), 298–332 (EWIT…NQIL), and 333–367 (SSRS…KTTE).

Belongs to the PPR family. P subfamily.

It is found in the mitochondrion. This Arabidopsis thaliana (Mouse-ear cress) protein is Pentatricopeptide repeat-containing protein At5g09450, mitochondrial.